The primary structure comprises 166 residues: Ribosome-binding factor A (166 aa).

The tract at residues 119 to 166 (VQAQAKSGVYAGDEDPYVKPRVIGEDEDEDDEDGDDIDRSAPGYEPAH) is disordered. A compositionally biased stretch (acidic residues) spans 143 to 154 (EDEDEDDEDGDD).

The protein belongs to the RbfA family. In terms of assembly, monomer. Binds 30S ribosomal subunits, but not 50S ribosomal subunits or 70S ribosomes.

It is found in the cytoplasm. Its function is as follows. One of several proteins that assist in the late maturation steps of the functional core of the 30S ribosomal subunit. Associates with free 30S ribosomal subunits (but not with 30S subunits that are part of 70S ribosomes or polysomes). Required for efficient processing of 16S rRNA. May interact with the 5'-terminal helix region of 16S rRNA. The polypeptide is Ribosome-binding factor A (Clavibacter michiganensis subsp. michiganensis (strain NCPPB 382)).